A 209-amino-acid chain; its full sequence is Small ribosomal subunit protein uS4 (209 aa).

Residues 99 to 164 enclose the S4 RNA-binding domain; sequence TRLDNVVYRM…IPRVQELKEL (66 aa).

This sequence belongs to the universal ribosomal protein uS4 family. Part of the 30S ribosomal subunit. Contacts protein S5. The interaction surface between S4 and S5 is involved in control of translational fidelity.

One of the primary rRNA binding proteins, it binds directly to 16S rRNA where it nucleates assembly of the body of the 30S subunit. Functionally, with S5 and S12 plays an important role in translational accuracy. The chain is Small ribosomal subunit protein uS4 from Natranaerobius thermophilus (strain ATCC BAA-1301 / DSM 18059 / JW/NM-WN-LF).